A 196-amino-acid chain; its full sequence is dCTP deaminase (196 aa).

DCTP contacts are provided by residues 113–118 (RSSLAR), D131, 139–141 (VLE), Y174, K181, and Q185. E141 functions as the Proton donor/acceptor in the catalytic mechanism.

Belongs to the dCTP deaminase family. In terms of assembly, homotrimer.

It catalyses the reaction dCTP + H2O + H(+) = dUTP + NH4(+). It participates in pyrimidine metabolism; dUMP biosynthesis; dUMP from dCTP (dUTP route): step 1/2. In terms of biological role, catalyzes the deamination of dCTP to dUTP. In Wigglesworthia glossinidia brevipalpis, this protein is dCTP deaminase.